Reading from the N-terminus, the 1419-residue chain is Formin-1 (1419 aa).

Residues 1-622 (MEGTHCTLQL…TAEPQHQSPP (622 aa)) are microtubule-binding. 4 disordered regions span residues 138–194 (DWQG…MGKD), 262–331 (LGRE…KVVA), 343–641 (VVKT…TPKD), and 685–711 (SLTEQDDRTPGRLQAVWPPPKTKDTEE). A compositionally biased stretch (basic residues) spans 151 to 163 (RSTHGNKKPRRSS). Over residues 298–317 (SHQDPEKHPEAEKDEMEKPA) the composition is skewed to basic and acidic residues. Polar residues predominate over residues 394–411 (RSSQSPAGETASISSVSA). Basic and acidic residues predominate over residues 425–438 (IESEKLDEAPEGKR). The segment at 456–842 (NKRRAGLPLG…LNISSLSQLS (387 aa)) is mediates interaction with alpha-catenin. The span at 504–517 (FNNSASQSSTHKQT) shows a compositional bias: polar residues. The span at 520-529 (VPSPLSPRLP) shows a compositional bias: pro residues. Residues 614–623 (AEPQHQSPPG) show a composition bias toward polar residues. Over residues 685–694 (SLTEQDDRTP) the composition is skewed to basic and acidic residues. The stretch at 720-774 (AEYQAAILHLKREHKEEIENLQAQFELRAFHIRGEHAMITARLEETIENLKHELE) forms a coiled coil. 2 disordered regions span residues 859-978 (GMAS…AIEP) and 1390-1419 (SEKKVETKKINPTASLKERLRQKEASVTTN). 2 stretches are compositionally biased toward pro residues: residues 868-882 (LPPPPASIPPPPPLP) and 890-958 (PAPP…PPPG). The region spanning 870 to 957 (PPPASIPPPP…PPGLAPPPPP (88 aa)) is the FH1 domain. Residues 972–1388 (RKPAIEPSCP…KMAQESVSKL (417 aa)) enclose the FH2 domain.

Belongs to the formin homology family. Cappuccino subfamily. As to quaternary structure, interacts with alpha-catenin and may interact with tubulin. Phosphorylated on serine and possibly threonine residues.

The protein localises to the nucleus. The protein resides in the cytoplasm. It localises to the cell junction. It is found in the adherens junction. Its subcellular location is the cell membrane. Plays a role in the formation of adherens junction and the polymerization of linear actin cables. The protein is Formin-1 (FMN1) of Homo sapiens (Human).